We begin with the raw amino-acid sequence, 1040 residues long: DIS3-like exonuclease 1 (1040 aa).

In terms of domain architecture, CSD1 spans 232–310; sequence AGIKSGRYKQ…KGRTGALCEN (79 aa). In terms of domain architecture, CSD2 spans 360–426; that stretch reads VLVMPWDYRI…AEIATILVEN (67 aa). Positions 459–808 constitute an RNB domain; the sequence is RLDLRETHLV…VHRLLLAAVN (350 aa).

The protein belongs to the RNR ribonuclease family. Component of the RNA exosome complex. Mg(2+) serves as cofactor.

It is found in the cytoplasm. It carries out the reaction Exonucleolytic cleavage in the 3'- to 5'-direction to yield nucleoside 5'-phosphates.. Catalytic component of the RNA exosome complex which has 3'-&gt;5' exoribonuclease activity and participates in a multitude of cellular RNA processing and degradation events. This chain is DIS3-like exonuclease 1 (dis3l), found in Xenopus laevis (African clawed frog).